A 161-amino-acid polypeptide reads, in one-letter code: MSVNKVILIGNVGQDPRVKYFDTGSAVATFPLATTDRGYTLANGTQIPERTEWHNIVASNRLAEIVDKYVHKGDKLYLEGKIRTRSYSDQSGAMRYITEIFVDNMEMLSPKGANTGAGAPQPSATQAQQPQQMQQPQQPQQQAQPSQAQPIQDNPADDLPF.

In terms of domain architecture, SSB spans 3–109 (VNKVILIGNV…IFVDNMEMLS (107 aa)). The disordered stretch occupies residues 109-161 (SPKGANTGAGAPQPSATQAQQPQQMQQPQQPQQQAQPSQAQPIQDNPADDLPF). Residues 119–152 (APQPSATQAQQPQQMQQPQQPQQQAQPSQAQPIQ) are compositionally biased toward low complexity.

In terms of assembly, homotetramer.

This chain is Single-stranded DNA-binding protein (ssb), found in Bacteroides thetaiotaomicron (strain ATCC 29148 / DSM 2079 / JCM 5827 / CCUG 10774 / NCTC 10582 / VPI-5482 / E50).